Here is a 783-residue protein sequence, read N- to C-terminus: Lon protease (783 aa).

The Lon N-terminal domain occupies Ile11–Ile203. Residue Gly355–Thr362 participates in ATP binding. The Lon proteolytic domain maps to Ser591–Arg772. Active-site residues include Ser678 and Lys721.

The protein belongs to the peptidase S16 family. Homohexamer. Organized in a ring with a central cavity.

It is found in the cytoplasm. The catalysed reaction is Hydrolysis of proteins in presence of ATP.. In terms of biological role, ATP-dependent serine protease that mediates the selective degradation of mutant and abnormal proteins as well as certain short-lived regulatory proteins. Required for cellular homeostasis and for survival from DNA damage and developmental changes induced by stress. Degrades polypeptides processively to yield small peptide fragments that are 5 to 10 amino acids long. Binds to DNA in a double-stranded, site-specific manner. Regulates swarmer cell differentiation of V.parahaemolyticus. The chain is Lon protease from Vibrio parahaemolyticus serotype O3:K6 (strain RIMD 2210633).